A 627-amino-acid polypeptide reads, in one-letter code: uncharacterized protein (627 aa).

Positions 21-136 constitute a WH1 domain; the sequence is GISASDKILS…NSVCKRQTRS (116 aa). Residues 310–347 are disordered; it reads RGSLSTPRIPTHRDSYRSATKPDTVPKQTPPPTHNSYV.

This is an uncharacterized protein from Caenorhabditis elegans.